A 130-amino-acid polypeptide reads, in one-letter code: Transcription antitermination protein NusB (130 aa).

Belongs to the NusB family.

Its function is as follows. Involved in transcription antitermination. Required for transcription of ribosomal RNA (rRNA) genes. Binds specifically to the boxA antiterminator sequence of the ribosomal RNA (rrn) operons. In Bacillus cereus (strain ATCC 10987 / NRS 248), this protein is Transcription antitermination protein NusB.